The following is a 147-amino-acid chain: Protein phosphatase 1 regulatory subunit 14A (147 aa).

Over residues 1-11 (MAAQRLGKRVL) the composition is skewed to basic residues. A disordered region spans residues 1-37 (MAAQRLGKRVLSKLQSPSRARGPGGSPGGLQKRHARV). Serine 26 is subject to Phosphoserine. The interval 35-120 (ARVTVKYDRR…LLAKLQGLHR (86 aa)) is inhibitory. A Phosphothreonine; by PKC modification is found at threonine 38. The disordered stretch occupies residues 118-147 (LHRQPGLRQPSPSHDGSLSPLQDRARTAHP). Over residues 127–137 (PSPSHDGSLSP) the composition is skewed to polar residues. Phosphoserine is present on residues serine 128, serine 134, and serine 136.

Belongs to the PP1 inhibitor family. As to expression, isoform 1 is detected in aorta and testis. Isoform 2 is detected in aorta.

It is found in the cytoplasm. Its function is as follows. Inhibitor of PPP1CA. Has over 1000-fold higher inhibitory activity when phosphorylated, creating a molecular switch for regulating the phosphorylation status of PPP1CA substrates and smooth muscle contraction. This is Protein phosphatase 1 regulatory subunit 14A (PPP1R14A) from Homo sapiens (Human).